We begin with the raw amino-acid sequence, 373 residues long: MTKGLILLAAGGTGGHLFPAEALAHELRARGYSVHLVTDSRAERYAGKFPADAIHVVPSATIGSKNPVAIAKALLTLWRGYRAARSLIAGLKPLVVIGFGGYPTIPPLLAARALGVATVIHEQNAVMGRANRFLAPRVKAIAGGFLPAGGAYADKTVVTGNPVRPAVLAASETDYQPSGDGDPFELVVFGGSQGAQHFSNAVPSAICILDDVLRARLRITQQARPEDADRVKALYEKLKVPASVSPFFGDMAERIATSQMVISRSGASTVSELGVIGRPAVLVPYPYALDHDQAANAAAISGQGGAVVVPQSDLTPEKLSALLKDWMTSPAKLAQMAASARSAGQPEAAGLLADLVQTIAEGKNLKTLKDVKA.

Residues 13-15 (TGG), Asn124, Arg164, Ser192, and Gln293 contribute to the UDP-N-acetyl-alpha-D-glucosamine site.

Belongs to the glycosyltransferase 28 family. MurG subfamily.

The protein localises to the cell inner membrane. It carries out the reaction di-trans,octa-cis-undecaprenyl diphospho-N-acetyl-alpha-D-muramoyl-L-alanyl-D-glutamyl-meso-2,6-diaminopimeloyl-D-alanyl-D-alanine + UDP-N-acetyl-alpha-D-glucosamine = di-trans,octa-cis-undecaprenyl diphospho-[N-acetyl-alpha-D-glucosaminyl-(1-&gt;4)]-N-acetyl-alpha-D-muramoyl-L-alanyl-D-glutamyl-meso-2,6-diaminopimeloyl-D-alanyl-D-alanine + UDP + H(+). It participates in cell wall biogenesis; peptidoglycan biosynthesis. Cell wall formation. Catalyzes the transfer of a GlcNAc subunit on undecaprenyl-pyrophosphoryl-MurNAc-pentapeptide (lipid intermediate I) to form undecaprenyl-pyrophosphoryl-MurNAc-(pentapeptide)GlcNAc (lipid intermediate II). This is UDP-N-acetylglucosamine--N-acetylmuramyl-(pentapeptide) pyrophosphoryl-undecaprenol N-acetylglucosamine transferase from Allorhizobium ampelinum (strain ATCC BAA-846 / DSM 112012 / S4) (Agrobacterium vitis (strain S4)).